Here is a 182-residue protein sequence, read N- to C-terminus: UPF0397 protein BT9727_2423 (182 aa).

Transmembrane regions (helical) follow at residues 9–29 (VVAIGIGSALYGILGLWGFSI), 40–60 (AILTVFGALFGPVAGLLIGLI), 71–91 (WGIWWGWVISSGIIGFTMGFI), 114–134 (ITGLIGIVIAIIFAGAFDIIV), and 142–162 (IVIQVLGATIADVIVFLVLGL).

This sequence belongs to the UPF0397 family.

It is found in the cell membrane. This is UPF0397 protein BT9727_2423 from Bacillus thuringiensis subsp. konkukian (strain 97-27).